We begin with the raw amino-acid sequence, 857 residues long: Leucine--tRNA ligase (857 aa).

The 'HIGH' region signature appears at 42–52 (PYPSGRLHMGH). The 'KMSKS' region motif lies at 617–621 (KMSKS). Residue lysine 620 coordinates ATP.

This sequence belongs to the class-I aminoacyl-tRNA synthetase family.

The protein resides in the cytoplasm. The enzyme catalyses tRNA(Leu) + L-leucine + ATP = L-leucyl-tRNA(Leu) + AMP + diphosphate. This Vibrio vulnificus (strain CMCP6) protein is Leucine--tRNA ligase.